A 156-amino-acid chain; its full sequence is Probable succinate transporter subunit YjjB (156 aa).

4 helical membrane passes run 7-27 (WALL…AMVF), 54-74 (FGMN…VIGI), 86-106 (VFTV…TAMI), and 128-148 (FLKA…PGLW).

It belongs to the ThrE exporter (TC 2.A.79) family. The transporter is composed of YjjB and YjjP.

It localises to the cell inner membrane. Its function is as follows. Involved in succinate export with YjjP. Both proteins are required for export. In Yersinia pseudotuberculosis serotype I (strain IP32953), this protein is Probable succinate transporter subunit YjjB.